Here is an 82-residue protein sequence, read N- to C-terminus: Small ribosomal subunit protein uS12 (82 aa).

Asp59 bears the 3-methylthioaspartic acid mark.

It belongs to the universal ribosomal protein uS12 family. Part of the 30S ribosomal subunit. Contacts proteins S8 and S17. May interact with IF1 in the 30S initiation complex.

Its function is as follows. With S4 and S5 plays an important role in translational accuracy. Functionally, interacts with and stabilizes bases of the 16S rRNA that are involved in tRNA selection in the A site and with the mRNA backbone. Located at the interface of the 30S and 50S subunits, it traverses the body of the 30S subunit contacting proteins on the other side and probably holding the rRNA structure together. The combined cluster of proteins S8, S12 and S17 appears to hold together the shoulder and platform of the 30S subunit. In Actinobacillus pleuropneumoniae (Haemophilus pleuropneumoniae), this protein is Small ribosomal subunit protein uS12 (rpsL).